Reading from the N-terminus, the 333-residue chain is Probable tRNA pseudouridine synthase B (333 aa).

Aspartate 71 serves as the catalytic Nucleophile. The 76-residue stretch at 238-313 (LPKIWVRDSA…LVARTDRVVM (76 aa)) folds into the PUA domain.

It belongs to the pseudouridine synthase TruB family. Type 2 subfamily.

The enzyme catalyses uridine(55) in tRNA = pseudouridine(55) in tRNA. In terms of biological role, could be responsible for synthesis of pseudouridine from uracil-55 in the psi GC loop of transfer RNAs. The polypeptide is Probable tRNA pseudouridine synthase B (Pyrobaculum calidifontis (strain DSM 21063 / JCM 11548 / VA1)).